The chain runs to 250 residues: Putative (5-formylfuran-3-yl)methyl phosphate synthase (250 aa).

Lysine 29 serves as the catalytic Schiff-base intermediate with substrate. Lysine 87 serves as the catalytic Proton acceptor.

The protein belongs to the MfnB family.

It catalyses the reaction 2 D-glyceraldehyde 3-phosphate = 4-(hydroxymethyl)-2-furancarboxaldehyde phosphate + phosphate + 2 H2O. Functionally, catalyzes the formation of 4-(hydroxymethyl)-2-furancarboxaldehyde phosphate (4-HFC-P) from two molecules of glyceraldehyde-3-P (GA-3-P). The sequence is that of Putative (5-formylfuran-3-yl)methyl phosphate synthase from Streptomyces griseus subsp. griseus (strain JCM 4626 / CBS 651.72 / NBRC 13350 / KCC S-0626 / ISP 5235).